The following is a 108-amino-acid chain: Signal recognition particle 19 kDa protein (108 aa).

Belongs to the SRP19 family. In terms of assembly, part of the signal recognition particle protein translocation system, which is composed of SRP and FtsY. Archaeal SRP consists of a 7S RNA molecule of 300 nucleotides and two protein subunits: SRP54 and SRP19.

It is found in the cytoplasm. Involved in targeting and insertion of nascent membrane proteins into the cytoplasmic membrane. Binds directly to 7S RNA and mediates binding of the 54 kDa subunit of the SRP. The protein is Signal recognition particle 19 kDa protein of Thermococcus kodakarensis (strain ATCC BAA-918 / JCM 12380 / KOD1) (Pyrococcus kodakaraensis (strain KOD1)).